The primary structure comprises 250 residues: MTESTDKTTHFGYQTVREDDKAGLVQGVFTNVASKYDIMNDLMSGGLHRVWKDAMMDWLAPRAAQRLLDVAGGTGDIAFRFLKRAPEAEAVVLDLTESMLIAGRQRAEAEALDARLNWLVGDAMALPFADNSFDVYTISFGIRNVTRIPDALAEAYRVLRPGGRLMVLEFSQLPNPGLQKAYDLYSFNVIPPMGKVVTNDRDSYQYLVESIRRFPDQESFASMIRTAGFDQVKYRNLTFGVAALHSGWKL.

Residues T74, D94, 122–123 (DA), and S139 contribute to the S-adenosyl-L-methionine site.

The protein belongs to the class I-like SAM-binding methyltransferase superfamily. MenG/UbiE family.

The enzyme catalyses a 2-demethylmenaquinol + S-adenosyl-L-methionine = a menaquinol + S-adenosyl-L-homocysteine + H(+). It carries out the reaction a 2-methoxy-6-(all-trans-polyprenyl)benzene-1,4-diol + S-adenosyl-L-methionine = a 5-methoxy-2-methyl-3-(all-trans-polyprenyl)benzene-1,4-diol + S-adenosyl-L-homocysteine + H(+). It participates in quinol/quinone metabolism; menaquinone biosynthesis; menaquinol from 1,4-dihydroxy-2-naphthoate: step 2/2. The protein operates within cofactor biosynthesis; ubiquinone biosynthesis. Its function is as follows. Methyltransferase required for the conversion of demethylmenaquinol (DMKH2) to menaquinol (MKH2) and the conversion of 2-polyprenyl-6-methoxy-1,4-benzoquinol (DDMQH2) to 2-polyprenyl-3-methyl-6-methoxy-1,4-benzoquinol (DMQH2). This chain is Ubiquinone/menaquinone biosynthesis C-methyltransferase UbiE, found in Dinoroseobacter shibae (strain DSM 16493 / NCIMB 14021 / DFL 12).